The chain runs to 277 residues: Large ribosomal subunit protein uL2 (277 aa).

2 disordered regions span residues 24 to 55 (ITTS…RHHG) and 221 to 277 (RGSV…RKKK).

The protein belongs to the universal ribosomal protein uL2 family. As to quaternary structure, part of the 50S ribosomal subunit. Forms a bridge to the 30S subunit in the 70S ribosome.

In terms of biological role, one of the primary rRNA binding proteins. Required for association of the 30S and 50S subunits to form the 70S ribosome, for tRNA binding and peptide bond formation. It has been suggested to have peptidyltransferase activity; this is somewhat controversial. Makes several contacts with the 16S rRNA in the 70S ribosome. The protein is Large ribosomal subunit protein uL2 of Listeria innocua serovar 6a (strain ATCC BAA-680 / CLIP 11262).